A 148-amino-acid polypeptide reads, in one-letter code: Ribonuclease pancreatic (148 aa).

The N-terminal stretch at 1–25 (MGLEKSLLLLPLLVLVLGCVQPSLG) is a signal peptide. Substrate contacts are provided by Lys32 and Arg35. His37 functions as the Proton acceptor in the catalytic mechanism. 4 disulfide bridges follow: Cys50/Cys108, Cys64/Cys119, Cys82/Cys134, and Cys89/Cys96. Residues 65–69 (KPVNT) and Lys90 contribute to the substrate site. The active-site Proton donor is His143.

This sequence belongs to the pancreatic ribonuclease family. Monomer. Interacts with and forms tight 1:1 complexes with RNH1. Dimerization of two such complexes may occur. Interaction with RNH1 inhibits this protein. In terms of tissue distribution, pancreas.

It localises to the secreted. The enzyme catalyses an [RNA] containing cytidine + H2O = an [RNA]-3'-cytidine-3'-phosphate + a 5'-hydroxy-ribonucleotide-3'-[RNA].. It catalyses the reaction an [RNA] containing uridine + H2O = an [RNA]-3'-uridine-3'-phosphate + a 5'-hydroxy-ribonucleotide-3'-[RNA].. Functionally, endonuclease that catalyzes the cleavage of RNA on the 3' side of pyrimidine nucleotides. Acts on single-stranded and double-stranded RNA. The protein is Ribonuclease pancreatic (RNASE1) of Gerbillus nigeriae (Nigerian gerbil).